The following is a 254-amino-acid chain: Type III pantothenate kinase (254 aa).

6–13 contacts ATP; that stretch reads DVGNSNIV. Residues Tyr100 and 107 to 110 each bind substrate; that span reads GADR. Asp109 functions as the Proton acceptor in the catalytic mechanism. Asp129 contributes to the K(+) binding site. Thr132 serves as a coordination point for ATP. Thr184 serves as a coordination point for substrate.

This sequence belongs to the type III pantothenate kinase family. Homodimer. It depends on NH4(+) as a cofactor. K(+) is required as a cofactor.

Its subcellular location is the cytoplasm. The enzyme catalyses (R)-pantothenate + ATP = (R)-4'-phosphopantothenate + ADP + H(+). The protein operates within cofactor biosynthesis; coenzyme A biosynthesis; CoA from (R)-pantothenate: step 1/5. Its function is as follows. Catalyzes the phosphorylation of pantothenate (Pan), the first step in CoA biosynthesis. This chain is Type III pantothenate kinase, found in Citrifermentans bemidjiense (strain ATCC BAA-1014 / DSM 16622 / JCM 12645 / Bem) (Geobacter bemidjiensis).